The sequence spans 154 residues: Protein X (154 aa).

The mitochondrial targeting sequence stretch occupies residues proline 68–phenylalanine 117.

It belongs to the orthohepadnavirus protein X family. In terms of assembly, may form homodimer. May interact with host CEBPA, CFLAR, CREB1, DDB1, E4F1, HBXIP, HSPD1/HSP60, NFKBIA, POLR2E and SMAD4. Interacts with host SMC5-SMC6 complex and induces its degradation. Interacts with host TRPC4AP; leading to prevent ubiquitination of TRPC4AP. Interacts with host PLSCR1; this interaction promotes ubiquitination and degradation of HBx and impairs HBx-mediated cell proliferation. A fraction may be phosphorylated in insect cells and HepG2 cells, a human hepatoblastoma cell line. Phosphorylated in vitro by host protein kinase C or mitogen-activated protein kinase. N-acetylated in insect cells.

Its subcellular location is the host cytoplasm. The protein resides in the host nucleus. It localises to the host mitochondrion. In terms of biological role, multifunctional protein that plays a role in silencing host antiviral defenses and promoting viral transcription. Does not seem to be essential for HBV infection. May be directly involved in development of cirrhosis and liver cancer (hepatocellular carcinoma). Most of cytosolic activities involve modulation of cytosolic calcium. The effect on apoptosis is controversial depending on the cell types in which the studies have been conducted. May induce apoptosis by localizing in mitochondria and causing loss of mitochondrial membrane potential. May also modulate apoptosis by binding host CFLAR, a key regulator of the death-inducing signaling complex (DISC). Promotes viral transcription by using the host E3 ubiquitin ligase DDB1 to target the SMC5-SMC6 complex to proteasomal degradation. This host complex would otherwise bind to viral episomal DNA, and prevents its transcription. Moderately stimulates transcription of many different viral and cellular transcription elements. Promoters and enhancers stimulated by HBx contain DNA binding sites for NF-kappa-B, AP-1, AP-2, c-EBP, ATF/CREB, or the calcium-activated factor NF-AT. The sequence is that of Protein X from Hepatitis B virus genotype A2 subtype adw2 (strain Rutter 1979) (HBV-A).